The primary structure comprises 477 residues: UDP-N-acetylmuramate--L-alanine ligase (477 aa).

112–118 contacts ATP; the sequence is GAHGKTT.

This sequence belongs to the MurCDEF family.

The protein resides in the cytoplasm. It catalyses the reaction UDP-N-acetyl-alpha-D-muramate + L-alanine + ATP = UDP-N-acetyl-alpha-D-muramoyl-L-alanine + ADP + phosphate + H(+). It functions in the pathway cell wall biogenesis; peptidoglycan biosynthesis. Functionally, cell wall formation. The protein is UDP-N-acetylmuramate--L-alanine ligase of Acidovorax ebreus (strain TPSY) (Diaphorobacter sp. (strain TPSY)).